The chain runs to 757 residues: Nitrogen fixation protein FixI (757 aa).

Over 1-121 (MSCCASSAAI…GEEEGDDLLK (121 aa)) the chain is Cytoplasmic. The HMA domain maps to 37–107 (RQTELSVPNA…AIAERGYQTH (71 aa)). Residues Cys48 and Cys51 each coordinate a metal cation. A helical membrane pass occupies residues 122–143 (QLILAVAVSGFAATNIMLLSVS). Over 144-158 (VWSGADAATRDLFHW) the chain is Extracellular. A helical membrane pass occupies residues 159-178 (ISALIAGPALIYAGRFFYKS). The Cytoplasmic segment spans residues 179–185 (AWNAIRH). A helical membrane pass occupies residues 186 to 206 (GRTNMDVPIALAVSLSYGMSL). Residues 207-218 (HETIGHGEHAWF) lie on the Extracellular side of the membrane. The chain crosses the membrane as a helical span at residues 219 to 239 (DASVTLLFFLLIGRTLDHMMR). At 240 to 368 (GRARTAISGL…RARYRRIADR (129 aa)) the chain is on the cytoplasmic side. A helical transmembrane segment spans residues 369–391 (AARYYSPAVHLLALLTFVGWMLV). The Extracellular portion of the chain corresponds to 392–398 (EGDVRHA). The helical transmembrane segment at 399-416 (MLVAVAVLIITCPCALGL) threads the bilayer. Topologically, residues 417-688 (AVPVVQVVAA…ETSRHAGQLI (272 aa)) are cytoplasmic. The active-site 4-aspartylphosphate intermediate is Asp454. Mg(2+) is bound by residues Asp634 and Asp638. A helical membrane pass occupies residues 689-708 (RQNFALAIGYNVIAVPIAIL). Over 709–713 (GYATP) the chain is Extracellular. Residues 714-732 (LVAAVAMSSSSLVVVFNAL) traverse the membrane as a helical segment. Residues 733-757 (RLKRSLAAGRGATPGTLIHSGAVTS) are Cytoplasmic-facing.

This sequence belongs to the cation transport ATPase (P-type) (TC 3.A.3) family. Type IB subfamily.

The protein localises to the cell membrane. The enzyme catalyses ATP + H2O = ADP + phosphate + H(+). In terms of biological role, fixI is a pump of a specific cation involved in symbiotic nitrogen fixation. The four proteins FixG, FixH, FixI, and FixS may participate in a membrane-bound complex coupling the FixI cation pump with a redox process catalyzed by FixG. This is Nitrogen fixation protein FixI (fixI) from Rhizobium meliloti (strain 1021) (Ensifer meliloti).